The primary structure comprises 343 residues: Delta(1)-pyrroline-2-carboxylate/Delta(1)-piperideine-2-carboxylate reductase (343 aa).

Ser53 (charge relay system) is an active-site residue. His54 serves as the catalytic Proton donor. Residue Arg58 participates in substrate binding. 126 to 130 (HFAAL) is a binding site for NADP(+). Thr166 is a binding site for substrate. Residue 184 to 186 (DLA) participates in NADP(+) binding. 192–193 (HG) is a binding site for substrate. The Charge relay system role is filled by Asp194. NADP(+) is bound by residues 236 to 237 (HK) and 309 to 315 (RLPGDRR).

The protein belongs to the LDH2/MDH2 oxidoreductase family. In terms of assembly, homodimer.

It catalyses the reaction L-pipecolate + NADP(+) = Delta(1)-piperideine-2-carboxylate + NADPH + H(+). The enzyme catalyses L-proline + NADP(+) = 1-pyrroline-2-carboxylate + NADPH + H(+). The catalysed reaction is N-methyl-L-alanine + NADP(+) + H2O = methylamine + pyruvate + NADPH + H(+). With respect to regulation, is inhibited by the substrate analog pyrrole-2-carboxylate, and by 2-picolinate. In terms of biological role, catalyzes the reduction of both Delta(1)-pyrroline-2-carboxylate (Pyr2C) and Delta(1)-piperideine-2-carboxylate (Pip2C) to L-proline and L-pipecolate, respectively, using NADPH as the electron donor. Can catalyze the reverse oxidation reactions, albeit at a much lower rate. Is also able to catalyze in vitro the NADPH-dependent formation of N-methylalanine from pyruvate and N-methylamine; can act on other alpha-keto acids and specifically uses methylamine and not ammonia for these reductive amination reactions. Can use NADH instead of NADPH, although with much less efficiency. The chain is Delta(1)-pyrroline-2-carboxylate/Delta(1)-piperideine-2-carboxylate reductase from Pseudomonas syringae pv. tomato.